We begin with the raw amino-acid sequence, 37 residues long: Neuropeptide Y1-like conopeptide (37 aa).

A Phenylalanine amide modification is found at F37.

It belongs to the NPY family. Expressed by the venom duct.

The protein resides in the secreted. Its function is as follows. Causes hyperactivity such as jumping, rapid circling and tail flicking, when intraventricularly injected into mice brain. The polypeptide is Neuropeptide Y1-like conopeptide (Conus betulinus (Beech cone)).